Here is a 179-residue protein sequence, read N- to C-terminus: Replication restart protein DnaT (179 aa).

The span at 151–168 shows a compositional bias: polar residues; the sequence is SRSSNGGMPQRDINSVSE. The interval 151–179 is disordered; sequence SRSSNGGMPQRDINSVSEPDNHIPPGFRG.

The protein belongs to the DnaT family. Homooligomerizes. Interacts with PriB. Component of the replication restart primosome. Primosome assembly occurs via a 'hand-off' mechanism. PriA binds to replication forks, subsequently PriB then DnaT bind; DnaT then displaces ssDNA to generate the helicase loading substrate.

Functionally, involved in the restart of stalled replication forks, which reloads the replicative helicase on sites other than the origin of replication. Can function in multiple replication restart pathways. Displaces ssDNA from a PriB-ssDNA complex. Probably forms a spiral filament on ssDNA. This Salmonella arizonae (strain ATCC BAA-731 / CDC346-86 / RSK2980) protein is Replication restart protein DnaT.